The chain runs to 596 residues: MADAEASATMADEAKPDSKTLQILRDMANRLRIHSIRATCASSSGHPISCSSAAEIMSVLFFHVMRYKQADPKNPDNDRFILSKRLSFVDVATGWLGQGLGAACGMAYTGKYFDKASYRVFCLVGDVESWEGSVWEALAFASHYSLDNLVAIFDVNRLTHSTTLPLEHSIDVYQKRCEAFGWNTLVVDGRDVEALCQVFWQAAQMKNKPTAVVAKTFKGRGIPSVEDAENWHGKPMPKERADAIIKLIESQIETNKSLEPKAPIEDSPQINISVIEMTSPPDYEISDVIATRKACGLALAKLGHANDRVIVLDGDTKNSTFSDIFKREHPERFIECFIAEQNMVSVALGCVTRGRTVAFACTFAAFLTRAFDQIRMGGISQTNINLIGSHCGVSIGEDGPSQMALEDLAMFRAIPNCTIFYPSDAISTEHAVFLAANIKGMCYIRTSRPETAIIYTPQESFEIGQAKVIRQSVNDKITVVGAGITLHEALAAADDLSKQGISLRVIDLFTVKPLDAATIISNAKATGGQIITVEDHYPEGGIGEAVSAAVSMEPDIVVHHLAVSGIPRSGKPSDLLDMFGISSKHIIWAVERILMK.

Histidine 46 lines the substrate pocket. Thiamine diphosphate is bound by residues serine 49 and 94–96 (GWL). Aspartate 126 is a Mg(2+) binding site. Residues valine 127 and asparagine 156 each contribute to the thiamine diphosphate site. 2 residues coordinate Mg(2+): asparagine 156 and leucine 158. Thiamine diphosphate is bound by residues lysine 218 and histidine 232. Substrate contacts are provided by histidine 232, arginine 292, and serine 319. Thiamine diphosphate is bound by residues glutamate 340 and phenylalanine 366. Glutamate 340 acts as the Proton donor in catalysis. Substrate-binding residues include histidine 390 and aspartate 398. Residue glutamine 402 coordinates thiamine diphosphate. Position 448 (arginine 448) interacts with substrate.

The protein belongs to the transketolase family. As to quaternary structure, homodimer. Mg(2+) is required as a cofactor. Ca(2+) serves as cofactor. It depends on Mn(2+) as a cofactor. Requires Co(2+) as cofactor. The cofactor is thiamine diphosphate.

It is found in the cytoplasm. It catalyses the reaction D-sedoheptulose 7-phosphate + D-glyceraldehyde 3-phosphate = aldehydo-D-ribose 5-phosphate + D-xylulose 5-phosphate. In terms of biological role, catalyzes the transfer of a two-carbon ketol group from a ketose donor to an aldose acceptor, via a covalent intermediate with the cofactor thiamine pyrophosphate. The chain is Transketolase-like protein 1 (TKTL1) from Bos taurus (Bovine).